A 666-amino-acid polypeptide reads, in one-letter code: 1-deoxy-D-xylulose-5-phosphate synthase (666 aa).

Thiamine diphosphate is bound by residues histidine 103 and 144-146 (AHS). Residue aspartate 175 coordinates Mg(2+). Residues 176 to 177 (GA), asparagine 204, tyrosine 314, and glutamate 396 each bind thiamine diphosphate. Residue asparagine 204 participates in Mg(2+) binding.

The protein belongs to the transketolase family. DXPS subfamily. Homodimer. Mg(2+) serves as cofactor. The cofactor is thiamine diphosphate.

The enzyme catalyses D-glyceraldehyde 3-phosphate + pyruvate + H(+) = 1-deoxy-D-xylulose 5-phosphate + CO2. It participates in metabolic intermediate biosynthesis; 1-deoxy-D-xylulose 5-phosphate biosynthesis; 1-deoxy-D-xylulose 5-phosphate from D-glyceraldehyde 3-phosphate and pyruvate: step 1/1. Its function is as follows. Catalyzes the acyloin condensation reaction between C atoms 2 and 3 of pyruvate and glyceraldehyde 3-phosphate to yield 1-deoxy-D-xylulose-5-phosphate (DXP). This is 1-deoxy-D-xylulose-5-phosphate synthase from Nitrobacter winogradskyi (strain ATCC 25391 / DSM 10237 / CIP 104748 / NCIMB 11846 / Nb-255).